We begin with the raw amino-acid sequence, 92 residues long: Small ribosomal subunit protein uS19 (92 aa).

The protein belongs to the universal ribosomal protein uS19 family.

In terms of biological role, protein S19 forms a complex with S13 that binds strongly to the 16S ribosomal RNA. The chain is Small ribosomal subunit protein uS19 from Trichlorobacter lovleyi (strain ATCC BAA-1151 / DSM 17278 / SZ) (Geobacter lovleyi).